The following is a 536-amino-acid chain: Trigger factor (536 aa).

Residues 164–249 (GDQVIIDFAG…VKEVKVPAAT (86 aa)) enclose the PPIase FKBP-type domain. Positions 439 to 536 (IEADDDSGHV…APAKKAAAKK (98 aa)) are disordered. The span at 472 to 502 (TKKEAVKDEAKAEEAPAKKAPAKKAEPKAEA) shows a compositional bias: basic and acidic residues. Over residues 503–515 (KPAAAKKAAPAKA) the composition is skewed to low complexity. Basic and acidic residues predominate over residues 516 to 525 (AAEEKAEPAK). The segment covering 527-536 (APAKKAAAKK) has biased composition (basic residues).

It belongs to the FKBP-type PPIase family. Tig subfamily.

The protein resides in the cytoplasm. The catalysed reaction is [protein]-peptidylproline (omega=180) = [protein]-peptidylproline (omega=0). Involved in protein export. Acts as a chaperone by maintaining the newly synthesized protein in an open conformation. Functions as a peptidyl-prolyl cis-trans isomerase. In Sphingopyxis alaskensis (strain DSM 13593 / LMG 18877 / RB2256) (Sphingomonas alaskensis), this protein is Trigger factor.